A 307-amino-acid chain; its full sequence is 4-hydroxybenzoate geranyltransferase 1 (307 aa).

8 consecutive transmembrane segments (helical) span residues 38-58 (PIGSWLLAWPAFWSVALAADL), 62-82 (PKMLAIFGWWAVWIRGAGCTI), 120-140 (LFIGLGVLYQFNVLTLALAIV), 154-174 (ITYWPQAFLGVMISWGALLGS), 179-199 (GSVVPSIAYPLYISSFFWTLV), 230-250 (MWISWFGVGCIAALVIGGLIL), 252-272 (IGLPYYVFVAIATGQLVWQIF), and 286-306 (FVSNQWFGAIIFTGILLGRLF).

The protein belongs to the UbiA prenyltransferase family. Mg(2+) serves as cofactor. As to expression, expressed only in roots.

It localises to the endoplasmic reticulum membrane. It catalyses the reaction 4-hydroxybenzoate + (2E)-geranyl diphosphate = 3-geranyl-4-hydroxybenzoate + diphosphate. Its function is as follows. Prenyltransferase involved in the biosynthesis of shikonin, a naphthoquinone secondary metabolite. Could accept only geranyl diphosphate and not dimethylallyl diphosphate, farnesyl diphosphate, or geranylgeranyl diphosphate as substrate. The chain is 4-hydroxybenzoate geranyltransferase 1 (PGT-1) from Lithospermum erythrorhizon (Purple gromwell).